Here is a 141-residue protein sequence, read N- to C-terminus: MVHSQLPVAAPLRLLCALLLLPSATMIPGGISPRSVTDPDVQKAAEFAVQEYNALSTNAYYYKQLRIVEAQSQVVAGAKYYLTMELMKTKCAKTTGKPKVYKEIQNCELPPKAQQEKLTCHFQVWSRPWLEKMELTKMSCN.

The signal sequence occupies residues 1–26 (MVHSQLPVAAPLRLLCALLLLPSATM). In terms of domain architecture, Cystatin spans 29–129 (GGISPRSVTD…CHFQVWSRPW (101 aa)). The Secondary area of contact motif lies at 73 to 77 (QVVAG). 2 disulfide bridges follow: Cys91–Cys107 and Cys120–Cys140.

Belongs to the cystatin family. As to expression, expressed by the venom gland at an extremely low level (at protein level).

It localises to the secreted. Inhibits various C1 cysteine proteases including cathepsin L, papain and cathepsin B. This protein has no toxic activity and its function in the venom is unknown. It may play a role as a housekeeping or regulatory protein. The protein is Cystatin of Oxyuranus microlepidotus (Inland taipan).